We begin with the raw amino-acid sequence, 317 residues long: 4-diphosphocytidyl-2-C-methyl-D-erythritol kinase (317 aa).

K11 is a catalytic residue. Position 99–109 (99–109) interacts with ATP; the sequence is PVAAGLAGGST. D141 is an active-site residue.

The protein belongs to the GHMP kinase family. IspE subfamily.

It carries out the reaction 4-CDP-2-C-methyl-D-erythritol + ATP = 4-CDP-2-C-methyl-D-erythritol 2-phosphate + ADP + H(+). It functions in the pathway isoprenoid biosynthesis; isopentenyl diphosphate biosynthesis via DXP pathway; isopentenyl diphosphate from 1-deoxy-D-xylulose 5-phosphate: step 3/6. In terms of biological role, catalyzes the phosphorylation of the position 2 hydroxy group of 4-diphosphocytidyl-2C-methyl-D-erythritol. The protein is 4-diphosphocytidyl-2-C-methyl-D-erythritol kinase of Nostoc punctiforme (strain ATCC 29133 / PCC 73102).